The sequence spans 209 residues: Large ribosomal subunit protein uL3 (209 aa).

This sequence belongs to the universal ribosomal protein uL3 family. In terms of assembly, part of the 50S ribosomal subunit. Forms a cluster with proteins L14 and L19.

In terms of biological role, one of the primary rRNA binding proteins, it binds directly near the 3'-end of the 23S rRNA, where it nucleates assembly of the 50S subunit. This Pelobacter propionicus (strain DSM 2379 / NBRC 103807 / OttBd1) protein is Large ribosomal subunit protein uL3.